The sequence spans 123 residues: Large ribosomal subunit protein uL24 (123 aa).

This sequence belongs to the universal ribosomal protein uL24 family. Part of the 50S ribosomal subunit.

Its function is as follows. One of two assembly initiator proteins, it binds directly to the 5'-end of the 23S rRNA, where it nucleates assembly of the 50S subunit. In terms of biological role, located at the polypeptide exit tunnel on the outside of the subunit. The chain is Large ribosomal subunit protein uL24 from Methanocella arvoryzae (strain DSM 22066 / NBRC 105507 / MRE50).